We begin with the raw amino-acid sequence, 61 residues long: Large ribosomal subunit protein uL30 (61 aa).

This sequence belongs to the universal ribosomal protein uL30 family. As to quaternary structure, part of the 50S ribosomal subunit.

The protein is Large ribosomal subunit protein uL30 of Treponema pallidum subsp. pallidum (strain SS14).